The primary structure comprises 188 residues: Calcium load-activated calcium channel (188 aa).

At 1-4 the chain is on the lumenal side; sequence MSTM. Residues 5-32 form a helical membrane-spanning segment; sequence FADTILIVFISICTALLAEGITWVLVYR. The stretch at 32-89 forms a coiled coil; that stretch reads RTDKYKRLKAEVEKQSKKLEKKKETITESAGRQQKKKIERQEEKLKNNNRDLSMVRMK. Residues 33-86 lie on the Cytoplasmic side of the membrane; it reads TDKYKRLKAEVEKQSKKLEKKKETITESAGRQQKKKIERQEEKLKNNNRDLSMV. Residues 87–106 form a helical membrane-spanning segment; sequence RMKSMFAIGFCFTALMGMFN. Residues 107–120 lie on the Lumenal side of the membrane; that stretch reads SIFDGRVVAKLPFV. The stretch at 121 to 130 is an intramembrane region; it reads PLSYIQGLSH. The Lumenal portion of the chain corresponds to 131–140; sequence RNLLGEDYTD. A helical membrane pass occupies residues 141-162; the sequence is CSFIFLYILCTMSIRQNIQKML. The Cytoplasmic segment spans residues 163-188; the sequence is GLAPSRAATKQAGGFLGPPPQAAKFS.

Belongs to the TMCO1 family. As to quaternary structure, homodimer and homotetramer. Component of the multi-pass translocon (MPT) complex.

Its subcellular location is the endoplasmic reticulum membrane. It localises to the golgi apparatus membrane. In terms of biological role, calcium-selective channel required to prevent calcium stores from overfilling, thereby playing a key role in calcium homeostasis. In response to endoplasmic reticulum (ER) overloading, assembles into a homotetramer, forming a functional calcium-selective channel, regulating the calcium content in endoplasmic reticulum store. Component of the multi-pass translocon (MPT) complex that mediates insertion of multi-pass membrane proteins into the lipid bilayer of membranes. The chain is Calcium load-activated calcium channel from Danio rerio (Zebrafish).